The primary structure comprises 541 residues: Putative nucleobase-ascorbate transporter 10 (541 aa).

12 helical membrane-spanning segments follow: residues 52–72 (LLSL…MGGG), 79–99 (VIQT…FFGT), 101–121 (LPVI…IIYS), 141–161 (IQGA…LGVW), 173–193 (IAPL…PLLA), 196–216 (VEVG…LPRF), 235–255 (GMIL…SSGV), 299–319 (SFAM…LFYA), 376–396 (RVIQ…KFGA), 397–417 (FFAS…LCFV), 433–453 (FNIK…PQYF), and 476–496 (VIFM…DCTL).

It belongs to the nucleobase:cation symporter-2 (NCS2) (TC 2.A.40) family.

It is found in the membrane. The polypeptide is Putative nucleobase-ascorbate transporter 10 (NAT10) (Arabidopsis thaliana (Mouse-ear cress)).